We begin with the raw amino-acid sequence, 95 residues long: Small ribosomal subunit protein bS18 (95 aa).

Belongs to the bacterial ribosomal protein bS18 family. Part of the 30S ribosomal subunit. Forms a tight heterodimer with protein bS6.

Its function is as follows. Binds as a heterodimer with protein bS6 to the central domain of the 16S rRNA, where it helps stabilize the platform of the 30S subunit. In Rickettsia akari (strain Hartford), this protein is Small ribosomal subunit protein bS18.